The following is a 704-amino-acid chain: Elongation factor G 1 (704 aa).

In terms of domain architecture, tr-type G spans 8–285 (EKIRNIGISA…AVCAFLPNPK (278 aa)). GTP-binding positions include 17 to 24 (AHIDSGKT), 84 to 88 (DTPGH), and 138 to 141 (NKMD).

Belongs to the TRAFAC class translation factor GTPase superfamily. Classic translation factor GTPase family. EF-G/EF-2 subfamily.

It localises to the cytoplasm. In terms of biological role, catalyzes the GTP-dependent ribosomal translocation step during translation elongation. During this step, the ribosome changes from the pre-translocational (PRE) to the post-translocational (POST) state as the newly formed A-site-bound peptidyl-tRNA and P-site-bound deacylated tRNA move to the P and E sites, respectively. Catalyzes the coordinated movement of the two tRNA molecules, the mRNA and conformational changes in the ribosome. In Myxococcus xanthus (strain DK1622), this protein is Elongation factor G 1.